We begin with the raw amino-acid sequence, 269 residues long: 4-hydroxy-tetrahydrodipicolinate reductase (269 aa).

11–16 provides a ligand contact to NAD(+); sequence GPIGRM. Lys-39 lines the NADP(+) pocket. NAD(+) is bound by residues 101 to 103 and 125 to 128; these read GTT and ASNF. The active-site Proton donor/acceptor is His-158. Residue His-159 participates in (S)-2,3,4,5-tetrahydrodipicolinate binding. The Proton donor role is filled by Lys-162. 168-169 serves as a coordination point for (S)-2,3,4,5-tetrahydrodipicolinate; that stretch reads GT.

The protein belongs to the DapB family. As to quaternary structure, homotetramer.

The protein resides in the cytoplasm. It catalyses the reaction (S)-2,3,4,5-tetrahydrodipicolinate + NAD(+) + H2O = (2S,4S)-4-hydroxy-2,3,4,5-tetrahydrodipicolinate + NADH + H(+). The enzyme catalyses (S)-2,3,4,5-tetrahydrodipicolinate + NADP(+) + H2O = (2S,4S)-4-hydroxy-2,3,4,5-tetrahydrodipicolinate + NADPH + H(+). It participates in amino-acid biosynthesis; L-lysine biosynthesis via DAP pathway; (S)-tetrahydrodipicolinate from L-aspartate: step 4/4. Functionally, catalyzes the conversion of 4-hydroxy-tetrahydrodipicolinate (HTPA) to tetrahydrodipicolinate. The polypeptide is 4-hydroxy-tetrahydrodipicolinate reductase (Buchnera aphidicola subsp. Acyrthosiphon pisum (strain Tuc7)).